The following is a 273-amino-acid chain: Shikimate dehydrogenase (NADP(+)) (273 aa).

Shikimate contacts are provided by residues 14 to 16 (SKS) and T61. K65 serves as the catalytic Proton acceptor. N86 and D102 together coordinate shikimate. Residues 126 to 130 (GAGGA), 150 to 155 (NRTHAK), and M213 contribute to the NADP(+) site. Y215 contributes to the shikimate binding site. G237 provides a ligand contact to NADP(+).

The protein belongs to the shikimate dehydrogenase family. As to quaternary structure, homodimer.

It carries out the reaction shikimate + NADP(+) = 3-dehydroshikimate + NADPH + H(+). Its pathway is metabolic intermediate biosynthesis; chorismate biosynthesis; chorismate from D-erythrose 4-phosphate and phosphoenolpyruvate: step 4/7. Its function is as follows. Involved in the biosynthesis of the chorismate, which leads to the biosynthesis of aromatic amino acids. Catalyzes the reversible NADPH linked reduction of 3-dehydroshikimate (DHSA) to yield shikimate (SA). The chain is Shikimate dehydrogenase (NADP(+)) from Aeromonas salmonicida (strain A449).